Here is a 51-residue protein sequence, read N- to C-terminus: uncharacterized protein (51 aa).

Functionally, this protein is non-essential for virus function. This is an uncharacterized protein from Sulfolobus spindle-shape virus 1 (SSV1).